Consider the following 59-residue polypeptide: Potassium channel toxin alpha-KTx 1.14 (59 aa).

Residues 1-22 (MKKISFLLLLAIVICSIGWTDG) form the signal peptide. Residue Gln23 is modified to Pyrrolidone carboxylic acid. 3 disulfides stabilise this stretch: Cys29-Cys50, Cys35-Cys55, and Cys39-Cys57.

Belongs to the short scorpion toxin superfamily. Potassium channel inhibitor family. Alpha-KTx 01 subfamily. Expressed by the venom gland.

It localises to the secreted. In terms of biological role, potent blocker of both large-conductance calcium-activated potassium channels (KCa1.1/KCNMA1) and voltage-gated potassium channels (Kv1.3/KCNA3 and ERG1/Kv11.1/KCNH2). In Olivierus martensii (Manchurian scorpion), this protein is Potassium channel toxin alpha-KTx 1.14.